A 244-amino-acid polypeptide reads, in one-letter code: Probable H/ACA ribonucleoprotein complex subunit 1-like protein (244 aa).

Disordered stretches follow at residues Met1–Asp53 and Phe145–Glu244. 2 RGG-box regions span residues Arg4–Gly51 and Arg153–Gly222. Residues Arg160–Gly173 are compositionally biased toward basic and acidic residues. Composition is skewed to gly residues over residues Arg174 to Arg201 and Phe208 to Gly217. Residues Gly218–Tyr228 show a composition bias toward basic and acidic residues.

The protein belongs to the GAR1 family. In terms of assembly, component of the small nucleolar ribonucleoprotein particle containing H/ACA-type snoRNAs (H/ACA snoRNPs).

The protein localises to the nucleus. Its subcellular location is the nucleolus. In terms of biological role, required for ribosome biogenesis. Part of a complex which catalyzes pseudouridylation of rRNA. This involves the isomerization of uridine such that the ribose is subsequently attached to C5, instead of the normal N1. Pseudouridine ('psi') residues may serve to stabilize the conformation of rRNAs. Involved in phase separation into sub-nucleolar condensates. Essential for normal development and also plays a role in fertility. This is Probable H/ACA ribonucleoprotein complex subunit 1-like protein from Caenorhabditis elegans.